A 102-amino-acid polypeptide reads, in one-letter code: MNKIRKGDRVIVRTGKDKGKQGTVLAVLGEHVTVEGVNVAKKHVRPNPMLGTTGGVVDKVMPIHISNVALVDANGKPSRVGIKVENGVKTRVLKTTGAAVGA.

It belongs to the universal ribosomal protein uL24 family. In terms of assembly, part of the 50S ribosomal subunit.

Its function is as follows. One of two assembly initiator proteins, it binds directly to the 5'-end of the 23S rRNA, where it nucleates assembly of the 50S subunit. One of the proteins that surrounds the polypeptide exit tunnel on the outside of the subunit. The protein is Large ribosomal subunit protein uL24 of Ralstonia nicotianae (strain ATCC BAA-1114 / GMI1000) (Ralstonia solanacearum).